The sequence spans 323 residues: NAC transcription factor 25 (323 aa).

Positions 16–177 constitute an NAC domain; it reads LPPGFRFHPT…DWVLCRIYKK (162 aa). Residues 114–183 mediate DNA binding; it reads VGVKKALVFY…IYKKNSSQRP (70 aa). Low complexity predominate over residues 201-221; the sequence is KSSANSSSTSVLDNNDNNNNN. Positions 201 to 223 are disordered; it reads KSSANSSSTSVLDNNDNNNNNNE.

Expressed specifically in the tapetum.

The protein localises to the nucleus. In terms of biological role, transcription factor of the NAC family. May be associated with anther development and pollen production. Required for normal seed development and morphology. The sequence is that of NAC transcription factor 25 (NAC025) from Arabidopsis thaliana (Mouse-ear cress).